The primary structure comprises 336 residues: Peroxidase 72 (336 aa).

The N-terminal stretch at 1 to 23 (MAKSLNILIAALSLIAFSPFCLC) is a signal peptide. Intrachain disulfides connect cysteine 42–cysteine 122, cysteine 75–cysteine 80, cysteine 128–cysteine 329, and cysteine 207–cysteine 239. The active-site Proton acceptor is histidine 73. Aspartate 74, valine 77, glycine 79, aspartate 81, and serine 83 together coordinate Ca(2+). Residue proline 170 participates in substrate binding. N-linked (GlcNAc...) asparagine glycosylation is present at asparagine 173. Histidine 200 is a binding site for heme b. Residue threonine 201 coordinates Ca(2+). Asparagine 216 carries N-linked (GlcNAc...) asparagine glycosylation. The Ca(2+) site is built by aspartate 252, threonine 255, and aspartate 260.

This sequence belongs to the peroxidase family. Classical plant (class III) peroxidase subfamily. Requires heme b as cofactor. The cofactor is Ca(2+). In terms of tissue distribution, slightly expressed in roots.

Its subcellular location is the secreted. The enzyme catalyses 2 a phenolic donor + H2O2 = 2 a phenolic radical donor + 2 H2O. In terms of biological role, removal of H(2)O(2), oxidation of toxic reductants, biosynthesis and degradation of lignin, suberization, auxin catabolism, response to environmental stresses such as wounding, pathogen attack and oxidative stress. These functions might be dependent on each isozyme/isoform in each plant tissue. The protein is Peroxidase 72 (PER72) of Arabidopsis thaliana (Mouse-ear cress).